The primary structure comprises 96 residues: Antitoxin TacA3 (96 aa).

A neutralization domain region spans residues 61–96 (YLTERDTKMIMEILDNPPAPNEKLLAAAFALPDMKK).

The protein belongs to the TacA antitoxin family. Forms a complex with cognate toxin TacT3. Forms a 4:2 antitoxin:toxin complex with cognate toxin TacT3. Forms a 4:4 antitoxin:toxin complex with promoter DNA, where 2 TacT3 dimers bridge 2 TacA3 dimers. Only TacA3 contacts promoter DNA.

Its function is as follows. Antitoxin component of a type II toxin-antitoxin (TA) system. Counteracts the toxic effect of cognate toxin TacT3, but not TacT1 or TacT2. Plays a role in persister cell formation. In terms of biological role, the TacA3-TacT3 complex both represses and derepresses expression of its own operon. The hexameric 4:2 TacA3-TacT3 complex binds promoter DNA and represses its transcription; both subunits are required. The octomeric 4:4 TacA3-TacT3 complex derepresses the operon. The shift from hexameric to octomeric complex probably alters DNA-binding, leading to dissociation from the operator DNA and derepression. Does not bind the promoter of the TacA1-TacT1 operon. The sequence is that of Antitoxin TacA3 from Salmonella typhimurium (strain 14028s / SGSC 2262).